The sequence spans 384 residues: Galactokinase (384 aa).

Residue 34–37 (EHTD) participates in substrate binding. 123-129 (SSGLSSS) provides a ligand contact to ATP. Serine 129 and glutamate 161 together coordinate Mg(2+). Aspartate 173 serves as the catalytic Proton acceptor. Tyrosine 222 contacts substrate.

The protein belongs to the GHMP kinase family. GalK subfamily.

It is found in the cytoplasm. It carries out the reaction alpha-D-galactose + ATP = alpha-D-galactose 1-phosphate + ADP + H(+). Its pathway is carbohydrate metabolism; galactose metabolism. Its function is as follows. Catalyzes the transfer of the gamma-phosphate of ATP to D-galactose to form alpha-D-galactose-1-phosphate (Gal-1-P). The sequence is that of Galactokinase from Haemophilus influenzae (strain PittEE).